A 353-amino-acid chain; its full sequence is tRNA N6-adenosine threonylcarbamoyltransferase (353 aa).

Fe cation contacts are provided by His-109 and His-113. Substrate is bound by residues 136–140, Asp-169, Gly-182, Asp-186, and Asn-284; that span reads TVSGG. Asp-312 is a binding site for Fe cation.

This sequence belongs to the KAE1 / TsaD family. Requires Fe(2+) as cofactor.

The protein localises to the cytoplasm. The catalysed reaction is L-threonylcarbamoyladenylate + adenosine(37) in tRNA = N(6)-L-threonylcarbamoyladenosine(37) in tRNA + AMP + H(+). In terms of biological role, required for the formation of a threonylcarbamoyl group on adenosine at position 37 (t(6)A37) in tRNAs that read codons beginning with adenine. Is involved in the transfer of the threonylcarbamoyl moiety of threonylcarbamoyl-AMP (TC-AMP) to the N6 group of A37, together with TsaE and TsaB. TsaD likely plays a direct catalytic role in this reaction. The protein is tRNA N6-adenosine threonylcarbamoyltransferase of Chlorobium limicola (strain DSM 245 / NBRC 103803 / 6330).